A 1086-amino-acid polypeptide reads, in one-letter code: Sterol regulatory element-binding protein cleavage-activating protein (1086 aa).

At 1–35 (MRIFTLGKGRISRGYARQVNPSLFAKYSYCIANNP) the chain is on the cytoplasmic side. A helical membrane pass occupies residues 36–56 (WYFILVFTLLSITGIYSSLVA). The Lumenal segment spans residues 57-229 (YQQSLYDQSL…TVVARIPDLT (173 aa)). N-linked (GlcNAc...) asparagine glycans are attached at residues asparagine 94 and asparagine 168. A helical transmembrane segment spans residues 230–250 (VIYRWYLWVGFGVGLFAYLYL). One can recognise an SSD domain in the interval 233–391 (RWYLWVGFGV…GSFFLAVLSV (159 aa)). Residues 251–265 (SLVRLHDIRAKFGLT) lie on the Cytoplasmic side of the membrane. Residues 266–286 (ATIFIQSGTAYFSTCSLLYFF) traverse the membrane as a helical segment. Topologically, residues 287–290 (ERTG) are lumenal. The chain crosses the membrane as a helical span at residues 291 to 311 (PICPWPMAYYIIIFMDIENSF). Topologically, residues 312-337 (RLLRAVIASPQTKRVPSRIMEGFSST) are cytoplasmic. The helical transmembrane segment at 338 to 358 (IIASFSSLLKKLLTLFVLSFF) threads the bilayer. Residues 359 to 367 (VYPLVQEFC) are Lumenal-facing. The helical transmembrane segment at 368 to 388 (LFLACSFVVSFLLHGSFFLAV) threads the bilayer. At 389-422 (LSVDIRRLELQDFLDSNSSNRNSKWWVPYLEYVR) the chain is on the cytoplasmic side. The short motif at 396 to 401 (LELQDF) is the ER export signal element. The chain crosses the membrane as a helical span at residues 423–443 (FMWSPWIIDNLGTVSFHMYVI). At 444-544 (YLQLQSSTDI…FHDRRVWRWS (101 aa)) the chain is on the lumenal side. N-linked (GlcNAc...) asparagine glycosylation occurs at asparagine 454. A helical transmembrane segment spans residues 545–565 (TFFSILFAIDFAVGLLVKALL). The Cytoplasmic segment spans residues 566-1086 (RGWSDHDELS…QRKRSGTIGC (521 aa)). WD repeat units lie at residues 593–632 (HHQL…TKLV), 637–675 (QMPR…LMLQ), 680–727 (CKPN…EGAD), 736–776 (LSSP…WSPK), and 963–1009 (GHYN…KKHR). An interaction with sre1 region spans residues 640-1086 (RTLKAIALDP…QRKRSGTIGC (447 aa)).

The protein belongs to the WD repeat SCAP family. As to quaternary structure, forms a tight complex with scp1, composed of 4 copies of scp1 and 4 copies of sre1.

The protein localises to the endoplasmic reticulum membrane. It localises to the golgi apparatus membrane. Its function is as follows. Escort protein required for sre1 processing at low sterol as well as oxygen levels. May regulate export of the scp1/sre1 complex from the ER at low sterol or oxygen levels. 4-methyl sterols bound to scp1 may mask an ER export signal in scp1 leading to retention of the complex in the ER. Release of 4-methyl sterols may trigger a conformational change in the SSD domain of scp1 unmasking the ER export signal leading to recruitment into COPII-coated vesicles, transport to the Golgi complex, proteolytic cleavage of sre1 in the Golgi, release of the transcription factor fragment of sre1 from the membrane, its import into the nucleus and up-regulation of genes required for ergosterol biosynthesis as well as anaerobic growth. Binds 4-methyl sterols. In Schizosaccharomyces pombe (strain 972 / ATCC 24843) (Fission yeast), this protein is Sterol regulatory element-binding protein cleavage-activating protein.